The primary structure comprises 156 residues: Ribosomal RNA large subunit methyltransferase H (156 aa).

Residues Leu72, Gly104, and 123–128 (FGAMVW) contribute to the S-adenosyl-L-methionine site.

This sequence belongs to the RNA methyltransferase RlmH family. As to quaternary structure, homodimer.

It localises to the cytoplasm. The enzyme catalyses pseudouridine(1915) in 23S rRNA + S-adenosyl-L-methionine = N(3)-methylpseudouridine(1915) in 23S rRNA + S-adenosyl-L-homocysteine + H(+). Specifically methylates the pseudouridine at position 1915 (m3Psi1915) in 23S rRNA. This is Ribosomal RNA large subunit methyltransferase H from Dinoroseobacter shibae (strain DSM 16493 / NCIMB 14021 / DFL 12).